A 960-amino-acid polypeptide reads, in one-letter code: ATPase 4, plasma membrane-type (960 aa).

The Cytoplasmic segment spans residues 1–69 (MTTTVEDNRE…EKKESKFLKF (69 aa)). Residues 70-89 (LGFMWNPLSWVMEAAAIMAI) form a helical membrane-spanning segment. Residues 90 to 101 (ALANGGGKPPDW) are Extracellular-facing. The chain crosses the membrane as a helical span at residues 102-122 (QDFVGIITLLVINSTISFIEE). Topologically, residues 123–251 (NNAGNAAAAL…GHFQQVLTAI (129 aa)) are cytoplasmic. The helical transmembrane segment at 252–272 (GNFCICSIAVGMLIEIVVMYP) threads the bilayer. Residues 273–281 (IQHRAYRPG) lie on the Extracellular side of the membrane. Residues 282–299 (IDNLLVLLIGGIPIAMPT) traverse the membrane as a helical segment. At 300-651 (VLSVTMAIGS…TSRAIFQRMK (352 aa)) the chain is on the cytoplasmic side. Residue aspartate 337 is the 4-aspartylphosphate intermediate of the active site. Mg(2+) contacts are provided by aspartate 596 and aspartate 600. Residues 652–673 (NYTIYAVSITIRIVLGFMLLAL) traverse the membrane as a helical segment. The Extracellular segment spans residues 674-678 (IWQFD). The helical transmembrane segment at 679–701 (FPPFMVLIIAILNDGTIMTISKD) threads the bilayer. Residues 702-717 (RVKPSPLPDSWKLSEI) are Cytoplasmic-facing. Residues 718 to 738 (FATGVVFGSYMAMMTVIFFWV) traverse the membrane as a helical segment. Over 739–763 (SYKTDFFPRTFGVATLEKTAHDDFR) the chain is Extracellular. The chain crosses the membrane as a helical span at residues 764 to 784 (KLASAIYLQVSIISQALIFVT). At 785–796 (RSRSWSFVERPG) the chain is on the cytoplasmic side. A helical transmembrane segment spans residues 797-817 (IFLMIAFILAQLVATLIAVYA). The Extracellular portion of the chain corresponds to 818-825 (NWSFAAIE). A helical transmembrane segment spans residues 826–846 (GIGWGWAGVIWLYNIIFYIPL). Over 847-960 (DFIKFFIRYA…IETIQQAYTV (114 aa)) the chain is Cytoplasmic. Threonine 893 carries the post-translational modification Phosphothreonine. Serine 942 carries the post-translational modification Phosphoserine. An interaction with 14-3-3 proteins region spans residues 958-960 (YTV). Phosphothreonine is present on threonine 959.

Belongs to the cation transport ATPase (P-type) (TC 3.A.3) family. Type IIIA subfamily. As to quaternary structure, binds to 14-3-3 proteins. The binding is induced by phosphorylation of Thr-959. Binding to 14-3-3 proteins activates the H(+)-ATPase. In terms of tissue distribution, expressed in guard cells and roots.

The protein localises to the cell membrane. The enzyme catalyses ATP + H2O + H(+)(in) = ADP + phosphate + 2 H(+)(out). The plasma membrane H(+) ATPase of plants and fungi generates a proton gradient that drives the active transport of nutrients by H(+)-symport. The resulting external acidification and/or internal alkinization may mediate growth responses. This is ATPase 4, plasma membrane-type (AHA4) from Arabidopsis thaliana (Mouse-ear cress).